A 426-amino-acid chain; its full sequence is ATP-dependent Clp protease ATP-binding subunit ClpX (426 aa).

Positions 1-52 constitute a ClpX-type ZB domain; sequence MNEIKKRCSFCNKEESLDNPIINSGITPDVYICNYCLIVGSEILTGYLNKNP. The Zn(2+) site is built by C8, C11, C33, and C36. 129-136 lines the ATP pocket; it reads PTGSGKTL.

Belongs to the ClpX chaperone family. Component of the ClpX-ClpP complex. Forms a hexameric ring that, in the presence of ATP, binds to fourteen ClpP subunits assembled into a disk-like structure with a central cavity, resembling the structure of eukaryotic proteasomes.

In terms of biological role, ATP-dependent specificity component of the Clp protease. It directs the protease to specific substrates. Can perform chaperone functions in the absence of ClpP. The sequence is that of ATP-dependent Clp protease ATP-binding subunit ClpX from Helicobacter hepaticus (strain ATCC 51449 / 3B1).